The sequence spans 841 residues: 27S pre-rRNA (guanosine(2922)-2'-O)-methyltransferase (841 aa).

Gly-58, Trp-60, Asp-78, Asp-94, and Asp-119 together coordinate S-adenosyl-L-methionine. Catalysis depends on Lys-159, which acts as the Proton acceptor. Residues 360–389 adopt a coiled-coil conformation; that stretch reads QEKQRLNVKRERRRKNEMKQKELQRMQMNM. 2 positions are modified to phosphoserine: Ser-455 and Ser-464. 2 disordered regions span residues 480–534 and 565–654; these read RDAK…DDEA and NNVE…HSRD. Basic and acidic residues predominate over residues 505 to 517; sequence SLEKKEEEGKDYI. The segment covering 518-534 has biased composition (acidic residues); the sequence is EDNDDEGVEGDSDDDEA. Ser-529 carries the post-translational modification Phosphoserine. Residues 574-585 show a composition bias toward polar residues; the sequence is NTVNDGIMSSES. A compositionally biased stretch (basic and acidic residues) spans 598–607; that stretch reads HEEMHQKQDE. 2 stretches are compositionally biased toward acidic residues: residues 608–621 and 629–641; these read ADSSDESSSDDSDF and ASEEFDSDYDSEE. The segment covering 642–654 has biased composition (basic and acidic residues); it reads EKNQTKKEKHSRD.

The protein belongs to the class I-like SAM-binding methyltransferase superfamily. RNA methyltransferase RlmE family. SPB1 subfamily. As to quaternary structure, component of the nucleolar and nucleoplasmic pre-60S ribosomal particle. Interacts with the snoRNA-associated proteins NOP1 and NOP58.

The protein localises to the nucleus. Its subcellular location is the nucleolus. The enzyme catalyses guanosine(2922) in 27S pre-rRNA + S-adenosyl-L-methionine = 2'-O-methylguanosine(2922) in 27S pre-rRNA + S-adenosyl-L-homocysteine + H(+). Required for proper assembly of pre-ribosomal particles during the biogenesis of the 60S ribosomal subunit. Specifically methylates the guanosine in position 2922 of the 25S rRNA at the stage of 27S pre-rRNA maturation. Also methylates the uridine in position 2921 in the absence of methylation of this residue guided by snoRNA snR52 at the stage of 35S pre-rRNA maturation. This chain is 27S pre-rRNA (guanosine(2922)-2'-O)-methyltransferase, found in Saccharomyces cerevisiae (strain ATCC 204508 / S288c) (Baker's yeast).